A 174-amino-acid polypeptide reads, in one-letter code: Frataxin homolog, mitochondrial (174 aa).

The transit peptide at 1–21 directs the protein to the mitochondrion; sequence MIKRSLASLVRVSSVMGRRYM.

It belongs to the frataxin family. In terms of assembly, monomer. Forms a 24-mer complex made up of 8 copies of a trimeric subcomplex. Increments in mitochondrial iron uptake induce stepwise assembly of species ranging from trimers to 24-mers. Interacts with ISU1 with a 1 to 1 stoichiometry; the interaction is direct. Interacts with YHB1, SDH1, SDH2, AIM45 and CIR1. In terms of processing, processed in two steps by mitochondrial processing peptidase (MPP). MPP first cleaves the precursor to intermediate form and subsequently converts the intermediate to mature size protein.

It localises to the mitochondrion matrix. The catalysed reaction is 4 Fe(2+) + O2 + 4 H(+) = 4 Fe(3+) + 2 H2O. In terms of biological role, promotes the biosynthesis of heme as well as the assembly and repair of iron-sulfur clusters by delivering Fe(2+) to proteins involved in these pathways. Plays a role in the protection against iron-catalyzed oxidative stress through its ability to catalyze the oxidation of Fe(2+) to Fe(3+). Can store large amounts of the metal in the form of a ferrihydrite mineral by oligomerization. May be involved in regulation of the mitochondrial electron transport chain. The protein is Frataxin homolog, mitochondrial of Saccharomyces cerevisiae (strain ATCC 204508 / S288c) (Baker's yeast).